A 354-amino-acid chain; its full sequence is Glutamine synthetase (354 aa).

Residues 22–101 (FHAEYVWIDG…VLSETYNNDG (80 aa)) enclose the GS beta-grasp domain. Residues 108–354 (HRHHTAKVME…IIIETTILDK (247 aa)) form the GS catalytic domain.

It belongs to the glutamine synthetase family. As to quaternary structure, homooctamer.

The protein localises to the cytoplasm. It catalyses the reaction L-glutamate + NH4(+) + ATP = L-glutamine + ADP + phosphate + H(+). This chain is Glutamine synthetase (GLN1), found in Amanita muscaria (Fly agaric).